Reading from the N-terminus, the 451-residue chain is Probable multidrug resistance protein NorM (451 aa).

10 helical membrane passes run 44–66, 92–109, 130–147, 162–179, 186–208, 247–269, 282–304, 319–341, 391–413, and 423–445; these read IAAI…GLLL, YWLA…LWNS, YIRI…FQVI, VIGL…YTLI, FNYG…FIAM, GFPI…LLIA, ALNI…SIRL, IILS…IILF, IIFI…FLAL, and AIGF…LFRI.

Belongs to the multi antimicrobial extrusion (MATE) (TC 2.A.66.1) family.

It is found in the cell membrane. Functionally, multidrug efflux pump. This Buchnera aphidicola subsp. Baizongia pistaciae (strain Bp) protein is Probable multidrug resistance protein NorM (norM).